Here is a 249-residue protein sequence, read N- to C-terminus: NAD-dependent protein deacylase 2 (249 aa).

Residues 1 to 240 form the Deacetylase sirtuin-type domain; the sequence is MNVADLLASS…PRLVEEVKRR (240 aa). 18–37 serves as a coordination point for NAD(+); that stretch reads GAGISAESGVPTFRGPGGLW. Y62 and R65 together coordinate substrate. 96–99 lines the NAD(+) pocket; the sequence is QNVD. The Proton acceptor role is filled by H114. Positions 122, 125, 142, and 145 each coordinate Zn(2+). Residues 182-184, 208-210, and A226 each bind NAD(+); these read GTS and NVE.

It belongs to the sirtuin family. Class III subfamily. The cofactor is Zn(2+).

It localises to the cytoplasm. It catalyses the reaction N(6)-acetyl-L-lysyl-[protein] + NAD(+) + H2O = 2''-O-acetyl-ADP-D-ribose + nicotinamide + L-lysyl-[protein]. The enzyme catalyses N(6)-succinyl-L-lysyl-[protein] + NAD(+) + H2O = 2''-O-succinyl-ADP-D-ribose + nicotinamide + L-lysyl-[protein]. In terms of biological role, NAD-dependent lysine deacetylase and desuccinylase that specifically removes acetyl and succinyl groups on target proteins. Modulates the activities of several proteins which are inactive in their acylated form. Deacetylates the N-terminal lysine residue of Alba, the major archaeal chromatin protein and that, in turn, increases Alba's DNA binding affinity, thereby repressing transcription. The polypeptide is NAD-dependent protein deacylase 2 (Pyrobaculum aerophilum (strain ATCC 51768 / DSM 7523 / JCM 9630 / CIP 104966 / NBRC 100827 / IM2)).